Reading from the N-terminus, the 240-residue chain is MGSCQAGHNLHLCLAHHPPLVCATLILLLLGLSGLGLGGFLLTHTTGLRSPDIPQDWVSFLRSFGQLSLCPMNETVTGTWQGPHVVGLLTTLNFGDGPDRNKTQTFQAKIHGSQIGLTGSSAGESVLVTARVASGRTPGTCLYFSGVPKVLPSSQPPISCSEEGVGNATLSPVMGEECVRVWSHERLVLTELLTSEELALCGSRVLGLGFFLVLLCGLLCCTTAVCFHPRPEFHWSRTRL.

Positions 1 to 38 are cleaved as a signal peptide; the sequence is MGSCQAGHNLHLCLAHHPPLVCATLILLLLGLSGLGLG. At 39–204 the chain is on the extracellular side; sequence GFLLTHTTGL…SEELALCGSR (166 aa). The N-linked (GlcNAc...) asparagine glycan is linked to Asn167. A helical membrane pass occupies residues 205–225; sequence VLGLGFFLVLLCGLLCCTTAV. Residues 226 to 240 lie on the Cytoplasmic side of the membrane; sequence CFHPRPEFHWSRTRL.

Interacts with IGFBP3. Interacts with CASP8.

The protein localises to the cell membrane. In terms of biological role, cell death receptor specific for IGFBP3, may mediate caspase-8-dependent apoptosis upon ligand binding. This chain is Insulin-like growth factor-binding protein 3 receptor (Tmem219), found in Mus musculus (Mouse).